The sequence spans 212 residues: Ras-related protein Rab-21 (212 aa).

Residues 14-21 (GEGCVGKT), 62-66 (DTAGQ), and 120-123 (NKCD) each bind GTP. Residues 181 to 212 (TNTTGQTTNRSERIPIVPDSDSGNKQPGCCSN) form a disordered region. The span at 201-212 (DSGNKQPGCCSN) shows a compositional bias: polar residues. Residues C209 and C210 are each lipidated (S-geranylgeranyl cysteine).

The protein belongs to the small GTPase superfamily. Rab family. In terms of assembly, interacts with LIM domain proteins limF and ChLim.

The protein resides in the cell membrane. Functionally, involved in the regulation of phagocytosis. In Dictyostelium discoideum (Social amoeba), this protein is Ras-related protein Rab-21 (rab21).